A 328-amino-acid chain; its full sequence is Spermatogenesis- and oogenesis-specific basic helix-loop-helix-containing protein 1 (328 aa).

A bHLH domain is found at 53–104 (SCLRRNVISERERRKRMSLSCERLRALLPQFDGRREDMASVLEMSVQFLRLA). The tract at residues 290-328 (EAGSALGSDVDDGTSFLLTAGPSSWPGEWGPGFRAGPPA) is disordered. The segment covering 310 to 321 (GPSSWPGEWGPG) has biased composition (low complexity).

In terms of assembly, forms both hetero- and homodimers with SOHLH2.

Its subcellular location is the cytoplasm. It is found in the nucleus. Its function is as follows. Transcription regulator of both male and female germline differentiation. Suppresses genes involved in spermatogonial stem cells maintenance, and induces genes important for spermatogonial differentiation. Coordinates oocyte differentiation without affecting meiosis I. This Homo sapiens (Human) protein is Spermatogenesis- and oogenesis-specific basic helix-loop-helix-containing protein 1 (SOHLH1).